A 188-amino-acid polypeptide reads, in one-letter code: Elongation factor P-like protein (188 aa).

Belongs to the elongation factor P family.

This chain is Elongation factor P-like protein, found in Vibrio campbellii (strain ATCC BAA-1116).